The chain runs to 338 residues: P2Y purinoceptor 14 (338 aa).

The Extracellular segment spans residues 1 to 29; it reads MNNSTTTDPPNQPCSWNTLITKQIIPVLY. N-linked (GlcNAc...) asparagine glycans are attached at residues Asn-2 and Asn-3. A helical membrane pass occupies residues 30–50; it reads GMVFITGLLLNGISGWIFFYV. The Cytoplasmic segment spans residues 51–55; that stretch reads PSSKS. A helical membrane pass occupies residues 56–76; the sequence is FIIYLKNIVVADFLMGLTFPF. Residues 77 to 96 lie on the Extracellular side of the membrane; it reads KVLGDSGLGPWQVNVFVCRV. Cys-94 and Cys-172 form a disulfide bridge. A helical transmembrane segment spans residues 97–117; the sequence is SAVIFYVNMYVSIVFFGLISF. Residues 118 to 139 are Cytoplasmic-facing; the sequence is DRYYKIVKPLLTSIVQSVNYSK. A helical membrane pass occupies residues 140–160; sequence LLSVLVWMLMLLLAVPNIILT. Residues 161–188 lie on the Extracellular side of the membrane; sequence NQGVKEVTKIQCMELKNELGRKWHKASN. A helical transmembrane segment spans residues 189–209; sequence YIFVSIFWVVFLLLIVFYTAI. Residues 210 to 234 lie on the Cytoplasmic side of the membrane; that stretch reads TRKIFKSHLKSRKNSTSVKRKSSRN. A helical transmembrane segment spans residues 235–255; sequence IFSIVLVFVVCFVPYHIARIP. The Extracellular segment spans residues 256-278; sequence YTKSQTEGHYSCRTKETLLYAKE. The chain crosses the membrane as a helical span at residues 279–299; the sequence is FTLLLSAANVCLDPIIYFFLC. Residues 300-338 are Cytoplasmic-facing; that stretch reads QPFREVLNKKLHMSLKVQNDLEVSKTKRENAIHESTDTL.

This sequence belongs to the G-protein coupled receptor 1 family.

Its subcellular location is the cell membrane. Functionally, receptor for UDP-glucose coupled to G-proteins. The chain is P2Y purinoceptor 14 (P2ry14) from Mus musculus (Mouse).